A 124-amino-acid chain; its full sequence is Desulfoferrodoxin homolog (124 aa).

Fe cation is bound by residues C10, C13, C29, C30, H49, H69, H75, C117, and H120.

Belongs to the desulfoferrodoxin family. Fe(3+) is required as a cofactor. Requires Cu(2+) as cofactor.

The polypeptide is Desulfoferrodoxin homolog (Methanothermobacter thermautotrophicus (strain ATCC 29096 / DSM 1053 / JCM 10044 / NBRC 100330 / Delta H) (Methanobacterium thermoautotrophicum)).